The primary structure comprises 92 residues: Putative regulatory protein CKL_1364 (92 aa).

Belongs to the RemA family.

This Clostridium kluyveri (strain ATCC 8527 / DSM 555 / NBRC 12016 / NCIMB 10680 / K1) protein is Putative regulatory protein CKL_1364.